The following is a 137-amino-acid chain: Acetyltransferase Atu2258 (137 aa).

In terms of domain architecture, N-acetyltransferase spans 1-137 (MNFVLSDVAD…QSITWLEKRF (137 aa)). CoA contacts are provided by residues 66-68 (LFV), glycine 74, and 108-110 (RTY).

Functionally, catalyzes the transfer of an acetyl group from acetyl coenzyme A (AcCoA) to an acceptor substrate and releases both CoA and the acetylated product. It prefers glucosamine 6-phosphate or dopamine. It can also use the thialysine, N(8)-acetylspermidine, chloramphenicol, puromycin, polymyxin B, and 4-aminobutyrate ethyl ester. The polypeptide is Acetyltransferase Atu2258 (Agrobacterium fabrum (strain C58 / ATCC 33970) (Agrobacterium tumefaciens (strain C58))).